The chain runs to 753 residues: Polyribonucleotide nucleotidyltransferase (753 aa).

Mg(2+) is bound by residues aspartate 543 and aspartate 549. The KH domain occupies 609–668 (PRITTVKIPVAKIGELIGPKGKNINALTEETGANISIEDDGTVFISAADGASAEAAIEKI). Residues 680–749 (GERFLGTVVK…NRGKISLVPV (70 aa)) form the S1 motif domain.

It belongs to the polyribonucleotide nucleotidyltransferase family. Mg(2+) is required as a cofactor.

The protein localises to the cytoplasm. The enzyme catalyses RNA(n+1) + phosphate = RNA(n) + a ribonucleoside 5'-diphosphate. Its function is as follows. Involved in mRNA degradation. Catalyzes the phosphorolysis of single-stranded polyribonucleotides processively in the 3'- to 5'-direction. The protein is Polyribonucleotide nucleotidyltransferase of Corynebacterium glutamicum (strain ATCC 13032 / DSM 20300 / JCM 1318 / BCRC 11384 / CCUG 27702 / LMG 3730 / NBRC 12168 / NCIMB 10025 / NRRL B-2784 / 534).